Consider the following 459-residue polypeptide: Glycosyl hydrolase family 109 protein (459 aa).

The tat-type signal signal peptide spans 1-31; sequence MHNIHRRHFLKAAGAVTAGLITANITASTHA. Residues 64 to 65, aspartate 86, 135 to 138, 155 to 156, and asparagine 184 each bind NAD(+); these read ER, WEWH, and EV. Residues tyrosine 213, arginine 232, 244 to 247, and tyrosine 326 each bind substrate; that span reads YPTH. Tyrosine 244 is a binding site for NAD(+).

This sequence belongs to the Gfo/Idh/MocA family. Glycosyl hydrolase 109 subfamily. Requires NAD(+) as cofactor. Post-translationally, predicted to be exported by the Tat system. The position of the signal peptide cleavage has not been experimentally proven.

Its function is as follows. Glycosidase. This is Glycosyl hydrolase family 109 protein from Shewanella putrefaciens (strain CN-32 / ATCC BAA-453).